A 402-amino-acid chain; its full sequence is Proline-rich protein 25 (402 aa).

Disordered stretches follow at residues 1-29 (MART…AAAH), 109-255 (TVPG…MVGS), and 337-371 (EAAQ…CPGR). The segment covering 345–355 (RRTAPPRRTAS) has biased composition (low complexity). Positions 356 to 367 (PEPPAPGAPLPA) are enriched in pro residues.

This chain is Proline-rich protein 25 (PRR25), found in Homo sapiens (Human).